Here is a 622-residue protein sequence, read N- to C-terminus: Auxin response factor 11 (622 aa).

A DNA-binding region (TF-B3) is located at residues 145–247 (FVKILTASDT…DLRVGVRRLA (103 aa)). Disordered regions lie at residues 358–398 (SIQR…ISEI) and 483–513 (SNIS…TRSR). Polar residues-rich tracts occupy residues 376–387 (SALTPTPTQQQS) and 483–511 (SNIS…TSTR). In terms of domain architecture, PB1 spans 511–594 (RSRIKVQMQG…KKLFIYPSDE (84 aa)).

This sequence belongs to the ARF family. As to quaternary structure, homodimers and heterodimers.

The protein resides in the nucleus. In terms of biological role, auxin response factors (ARFs) are transcriptional factors that bind specifically to the DNA sequence 5'-TGTCTC-3' found in the auxin-responsive promoter elements (AuxREs). Could act as transcriptional activator or repressor. Formation of heterodimers with Aux/IAA proteins may alter their ability to modulate early auxin response genes expression. The protein is Auxin response factor 11 (ARF11) of Arabidopsis thaliana (Mouse-ear cress).